Consider the following 566-residue polypeptide: Type IV pilus assembly ATPase PilB (566 aa).

321–328 (GPTGSGKT) contributes to the ATP binding site. Residues Cys454, Cys457, Cys490, and Cys493 each coordinate Zn(2+).

Belongs to the GSP E family. In terms of assembly, homohexamer. Interacts with PilC. Interacts with PilM.

The protein resides in the cytoplasm. In terms of biological role, ATPase component of the type IV pilus (T4P) that plays a role in surface and host cell adhesion, colonization, biofilm maturation, virulence, and twitching, a form of surface-associated motility facilitated by cycles of extension, adhesion, and retraction of T4P fibers. Acts as a molecular motor to provide the energy that is required for biogenesis of the pilus and the extrusion of substrates generated in the cytoplasm. PilB ATPase activity is also essential for T4P extension while antagonist PilT ATPase activity is required for T4P retraction. In addition, functions as a regulator of exopolysaccharide (EPS) downstream of the T4P filament and upstream of the Dif signaling. In Myxococcus xanthus (strain DK1622), this protein is Type IV pilus assembly ATPase PilB (pilB).